We begin with the raw amino-acid sequence, 342 residues long: S-adenosylmethionine:tRNA ribosyltransferase-isomerase (342 aa).

It belongs to the QueA family. As to quaternary structure, monomer.

Its subcellular location is the cytoplasm. It catalyses the reaction 7-aminomethyl-7-carbaguanosine(34) in tRNA + S-adenosyl-L-methionine = epoxyqueuosine(34) in tRNA + adenine + L-methionine + 2 H(+). The protein operates within tRNA modification; tRNA-queuosine biosynthesis. Its function is as follows. Transfers and isomerizes the ribose moiety from AdoMet to the 7-aminomethyl group of 7-deazaguanine (preQ1-tRNA) to give epoxyqueuosine (oQ-tRNA). This is S-adenosylmethionine:tRNA ribosyltransferase-isomerase from Zymomonas mobilis subsp. mobilis (strain ATCC 31821 / ZM4 / CP4).